Here is a 199-residue protein sequence, read N- to C-terminus: Dephospho-CoA kinase (199 aa).

Residues 4 to 199 (VLGITGGIAT…KWLEEQIGKK (196 aa)) form the DPCK domain. Residue 12–17 (ATGKST) participates in ATP binding.

This sequence belongs to the CoaE family.

It localises to the cytoplasm. The catalysed reaction is 3'-dephospho-CoA + ATP = ADP + CoA + H(+). The protein operates within cofactor biosynthesis; coenzyme A biosynthesis; CoA from (R)-pantothenate: step 5/5. Functionally, catalyzes the phosphorylation of the 3'-hydroxyl group of dephosphocoenzyme A to form coenzyme A. The protein is Dephospho-CoA kinase of Enterococcus faecalis (strain ATCC 700802 / V583).